We begin with the raw amino-acid sequence, 429 residues long: Histidinol dehydrogenase (429 aa).

Tyr-130, Gln-191, and Asn-214 together coordinate NAD(+). Substrate contacts are provided by Ser-237, Gln-259, and His-262. Zn(2+)-binding residues include Gln-259 and His-262. Active-site proton acceptor residues include Glu-327 and His-328. His-328, Asp-361, Glu-415, and His-420 together coordinate substrate. Asp-361 provides a ligand contact to Zn(2+). Zn(2+) is bound at residue His-420.

The protein belongs to the histidinol dehydrogenase family. The cofactor is Zn(2+).

It catalyses the reaction L-histidinol + 2 NAD(+) + H2O = L-histidine + 2 NADH + 3 H(+). It functions in the pathway amino-acid biosynthesis; L-histidine biosynthesis; L-histidine from 5-phospho-alpha-D-ribose 1-diphosphate: step 9/9. Functionally, catalyzes the sequential NAD-dependent oxidations of L-histidinol to L-histidinaldehyde and then to L-histidine. The chain is Histidinol dehydrogenase from Neisseria gonorrhoeae (strain ATCC 700825 / FA 1090).